Here is a 212-residue protein sequence, read N- to C-terminus: Urease accessory protein UreG 2 (212 aa).

Residue 11–18 participates in GTP binding; it reads GPVGSGKT.

This sequence belongs to the SIMIBI class G3E GTPase family. UreG subfamily. Homodimer. UreD, UreF and UreG form a complex that acts as a GTP-hydrolysis-dependent molecular chaperone, activating the urease apoprotein by helping to assemble the nickel containing metallocenter of UreC. The UreE protein probably delivers the nickel.

It localises to the cytoplasm. Its function is as follows. Facilitates the functional incorporation of the urease nickel metallocenter. This process requires GTP hydrolysis, probably effectuated by UreG. The protein is Urease accessory protein UreG 2 of Brucella abortus (strain 2308).